The sequence spans 158 residues: Protein EOLA2 (158 aa).

Positions 6–92 (LSFRQPYAGF…IAGLVDIGET (87 aa)) constitute an ASCH domain.

The protein belongs to the EOLA family.

In Homo sapiens (Human), this protein is Protein EOLA2.